Consider the following 209-residue polypeptide: Thymidylate kinase (209 aa).

10–17 (GLDGAGKS) provides a ligand contact to ATP.

This sequence belongs to the thymidylate kinase family.

The enzyme catalyses dTMP + ATP = dTDP + ADP. In terms of biological role, phosphorylation of dTMP to form dTDP in both de novo and salvage pathways of dTTP synthesis. The polypeptide is Thymidylate kinase (Francisella tularensis subsp. holarctica (strain OSU18)).